The chain runs to 295 residues: Inositol monophosphatase 1 (295 aa).

Positions 73, 92, 94, 95, and 231 each coordinate Mg(2+). Substrate is bound at residue E73. Substrate contacts are provided by residues I94 to T97 and D231.

This sequence belongs to the inositol monophosphatase superfamily. The cofactor is Mg(2+).

It is found in the cytoplasm. Its subcellular location is the nucleus. The catalysed reaction is a myo-inositol phosphate + H2O = myo-inositol + phosphate. It participates in polyol metabolism; myo-inositol biosynthesis; myo-inositol from D-glucose 6-phosphate: step 2/2. Its activity is regulated as follows. Inhibited by Li(+) and Na(+). Responsible for the provision of inositol required for synthesis of phosphatidylinositol and polyphosphoinositides. This chain is Inositol monophosphatase 1 (INM1), found in Saccharomyces cerevisiae (strain ATCC 204508 / S288c) (Baker's yeast).